Here is a 317-residue protein sequence, read N- to C-terminus: Cytochrome c biogenesis protein CcsA (317 aa).

Transmembrane regions (helical) follow at residues 9-29, 46-63, 71-91, 98-118, 143-163, 225-245, 258-273, and 286-306; these read ILTH…LITF, TATA…WVYS, LYES…IFDF, LSAI…SGFL, MVLG…LLVI, IISL…VWAN, ETWA…IYLH, and AIVA…VNLL.

It belongs to the CcmF/CycK/Ccl1/NrfE/CcsA family. In terms of assembly, may interact with Ccs1.

The protein localises to the plastid. It is found in the chloroplast thylakoid membrane. Required during biogenesis of c-type cytochromes (cytochrome c6 and cytochrome f) at the step of heme attachment. This Citrus sinensis (Sweet orange) protein is Cytochrome c biogenesis protein CcsA.